The sequence spans 67 residues: Minor structural pilin EpdD (67 aa).

The propeptide occupies M1–G13. Residues Q14–L22 carry the QXSXEXXXL motif.

In terms of processing, the N-terminus is cleaved by the prepilin peptidase EppA, which recognizes the class III signal sequence. Post-translationally, N-glycosylated. Glycosylation is AglB-dependent. The N-glycosylation does not occur unless the signal peptide has been cleaved first.

The protein localises to the secreted. It is found in the cell surface. It localises to the fimbrium. Functionally, minor component of the type IV-like pili. Essential for pili formation. In Methanococcus maripaludis (strain DSM 14266 / JCM 13030 / NBRC 101832 / S2 / LL), this protein is Minor structural pilin EpdD.